Consider the following 1410-residue polypeptide: Ribosome-binding protein 1 (1410 aa).

Over 1–7 (MDIYDTQ) the chain is Lumenal. The chain crosses the membrane as a helical span at residues 8 to 28 (TLGVVVFGGFMVVSAIGIFLV). Topologically, residues 29 to 1410 (STFSMKETSY…GSSSKEGTSV (1382 aa)) are cytoplasmic. 2 disordered regions span residues 44 to 90 (NQRK…DPAP) and 129 to 152 (QEKLASSPKDKKKKEKKVAKVEPA). Over residues 52–63 (THHQKVEKKKKE) the composition is skewed to basic residues. Over residues 64–88 (KTVEKKGKTKKKEEKPNGKIPDHDP) the composition is skewed to basic and acidic residues. Lys-148 participates in a covalent cross-link: Glycyl lysine isopeptide (Lys-Gly) (interchain with G-Cter in SUMO2). Residues Ser-159 and Ser-165 each carry the phosphoserine modification. Disordered stretches follow at residues 173–648 (APKE…PLYL) and 895–925 (QSSHASLRADAEKAQEQQQQMAELHSKLQSS). 2 stretches are compositionally biased toward polar residues: residues 191–209 (TPATGTTQGKKAEGTQNQS) and 225–238 (TPNQGKKTEGTPNQ). 33 tandem repeats follow at residues 197–206 (TQGKKAEGTQ), 207–216 (NQSKKAEGAP), 217–226 (NQGRKAEGTP), 227–236 (NQGKKTEGTP), 237–246 (NQGKKAEGTP), 247–256 (NQGKKAEGTP), 257–266 (NQGKKAEGAQ), 267–276 (NQGKKVDTTP), 277–286 (NQGKKVEGAP), 287–296 (TQGRKAEGAQ), 297–306 (NQAKKVEGAQ), 307–316 (NQGKKAEGAQ), 317–326 (NQGKKGEGAQ), 327–336 (NQGKKAEGAQ), 337–346 (NQGKKAEGAQ), 347–356 (NQGKKAEGAQ), 357–366 (NQGKKAEGAQ), 367–376 (NQGKKAEGAQ), 377–386 (NQGKKAEGAQ), 387–396 (NQGKKVEGAQ), 397–406 (NQGKKAEGAQ), 407–416 (NQGKKAEGAQ), 417–426 (NQGKKAEGAQ), 427–436 (NQGKKAEGAQ), 437–446 (NQGKKAEGAQ), 447–456 (NQGKKAEGAQ), 457–466 (NQGKKAEGAQ), 467–476 (NQGKKVEGAQ), 477–486 (NQGKKAEGAQ), 487–496 (NQGKKAEGAQ), 497–506 (NQGKKAEGAQ), 507–516 (NQGQKGEGAQ), and 517–526 (NQGKKTEGAQ). The interval 197–604 (TQGKKAEGTQ…NQGKKTESAS (408 aa)) is 41 X 10 AA approximate tandem repeats of [TN]-Q-[GSA]-[KRQT]-K-[ATGSV]-[ED]-[GTAS]-[ATIS]-[PQTAS]. Phosphothreonine occurs at positions 225, 235, 245, and 255. Composition is skewed to polar residues over residues 265-278 (AQNQGKKVDTTPNQ) and 295-519 (AQNQ…QNQG). Over residues 520–532 (KKTEGAQGKKAER) the composition is skewed to basic and acidic residues. A 34; approximate repeat occupies 527–534 (GKKAERSP). Ser-533 bears the Phosphoserine mark. Repeat unit 35 spans residues 535–544 (NQGKKGEGAP). A 36; approximate repeat occupies 545 to 554 (IQGKKADSVA). Residues 553–567 (VANQGTKVEGITNQG) are compositionally biased toward polar residues. A run of 2 repeats spans residues 555–564 (NQGTKVEGIT) and 565–574 (NQGKKAEGSP). Residues 568–581 (KKAEGSPSEGKKAE) show a composition bias toward basic and acidic residues. Ser-573 and Ser-583 each carry phosphoserine. A 39; approximate repeat occupies 575-584 (SEGKKAEGSP). 2 tandem repeats follow at residues 585–594 (NQGKKADAAA) and 595–604 (NQGKKTESAS). Over residues 602-612 (SASVQGRNTDV) the composition is skewed to polar residues. Ser-615 carries the phosphoserine modification. A Glycyl lysine isopeptide (Lys-Gly) (interchain with G-Cter in SUMO1) cross-link involves residue Lys-620. Ser-900 is modified (phosphoserine). Lys-932 is subject to N6-acetyllysine. A phosphoserine mark is found at Ser-959 and Ser-978. Disordered stretches follow at residues 1093–1122 (GPTLLKHPPAPAEPSSDLASKLREAEETQS), 1260–1287 (EMKSHVEDGDIAGAPASSPEAPPAEQDP), 1330–1362 (EKLRTAGPLESSETEEASQLKERLEKEKKLTSD), and 1378–1410 (QEQLAREKDTVKKLQEQLEKAEDGSSSKEGTSV). Phosphoserine is present on residues Ser-1276 and Ser-1277. Composition is skewed to basic and acidic residues over residues 1347 to 1360 (SQLKERLEKEKKLT) and 1381 to 1403 (LAREKDTVKKLQEQLEKAEDGSS).

Its subcellular location is the endoplasmic reticulum membrane. Functionally, acts as a ribosome receptor and mediates interaction between the ribosome and the endoplasmic reticulum membrane. The polypeptide is Ribosome-binding protein 1 (RRBP1) (Homo sapiens (Human)).